Reading from the N-terminus, the 113-residue chain is uncharacterized protein (113 aa).

This is an uncharacterized protein from Saccharomyces cerevisiae (strain ATCC 204508 / S288c) (Baker's yeast).